The primary structure comprises 316 residues: tRNA-cytidine(32) 2-sulfurtransferase (316 aa).

Residues Ser-58–Ser-63 carry the PP-loop motif motif. [4Fe-4S] cluster-binding residues include Cys-133, Cys-136, and Cys-224.

The protein belongs to the TtcA family. Homodimer. Requires Mg(2+) as cofactor. It depends on [4Fe-4S] cluster as a cofactor.

The protein localises to the cytoplasm. The catalysed reaction is cytidine(32) in tRNA + S-sulfanyl-L-cysteinyl-[cysteine desulfurase] + AH2 + ATP = 2-thiocytidine(32) in tRNA + L-cysteinyl-[cysteine desulfurase] + A + AMP + diphosphate + H(+). It functions in the pathway tRNA modification. Its function is as follows. Catalyzes the ATP-dependent 2-thiolation of cytidine in position 32 of tRNA, to form 2-thiocytidine (s(2)C32). The sulfur atoms are provided by the cysteine/cysteine desulfurase (IscS) system. In Aromatoleum aromaticum (strain DSM 19018 / LMG 30748 / EbN1) (Azoarcus sp. (strain EbN1)), this protein is tRNA-cytidine(32) 2-sulfurtransferase.